A 421-amino-acid polypeptide reads, in one-letter code: Gamma-glutamyl phosphate reductase (421 aa).

It belongs to the gamma-glutamyl phosphate reductase family.

Its subcellular location is the cytoplasm. The catalysed reaction is L-glutamate 5-semialdehyde + phosphate + NADP(+) = L-glutamyl 5-phosphate + NADPH + H(+). It participates in amino-acid biosynthesis; L-proline biosynthesis; L-glutamate 5-semialdehyde from L-glutamate: step 2/2. Catalyzes the NADPH-dependent reduction of L-glutamate 5-phosphate into L-glutamate 5-semialdehyde and phosphate. The product spontaneously undergoes cyclization to form 1-pyrroline-5-carboxylate. This chain is Gamma-glutamyl phosphate reductase, found in Pseudomonas aeruginosa (strain UCBPP-PA14).